Here is a 277-residue protein sequence, read N- to C-terminus: uncharacterized protein (277 aa).

ATP is bound at residue 32–39; it reads GPQGSGKS.

Belongs to the GLYK kinase family.

Its subcellular location is the cytoplasm. It is found in the nucleus. Its function is as follows. Has a role in meiosis. This is an uncharacterized protein from Schizosaccharomyces pombe (strain 972 / ATCC 24843) (Fission yeast).